A 1551-amino-acid polypeptide reads, in one-letter code: Envelopment polyprotein (1551 aa).

An N-terminal signal peptide occupies residues 1–17 (MSKRVLIIAVVVYLVFT). The Lumenal portion of the chain corresponds to 18-546 (TQNQITGNHT…CRMSSRPTVA (529 aa)). The disordered stretch occupies residues 24 to 66 (GNHTTINSSSPSTTEASSTPTVSRTPQTTTTSTAVSTTITATT). 2 N-linked (GlcNAc...) asparagine; by host glycosylation sites follow: N25 and N30. Residues 31–66 (SSSPSTTEASSTPTVSRTPQTTTTSTAVSTTITATT) show a composition bias toward low complexity. Residues N80, N142, and N413 are each glycosylated (N-linked (GlcNAc...) asparagine; by host). Residues 547-567 (LLLGIWIGCGYILTCIFSFLL) form a helical membrane-spanning segment. At 568–675 (YHLILFFANC…ISVGIFLKRT (108 aa)) the chain is on the cytoplasmic side. Residues 676–696 (TWLVVLLVLLGLAISPVQGAP) form a helical membrane-spanning segment. At 697 to 704 (TEVSNVKQ) the chain is on the lumenal side. The helical transmembrane segment at 705 to 725 (DGDYSICYFIFGCLVTAALLL) threads the bilayer. At 726–823 (KVKRTNSNGI…REKLFTTGLQ (98 aa)) the chain is on the cytoplasmic side. A helical membrane pass occupies residues 824–844 (LFINKTNVVVFALIMCFLLLL). Residues 845–1451 (TGHNASAFDS…GDFFKHYIGS (607 aa)) are Lumenal-facing. N-linked (GlcNAc...) asparagine; by host glycans are attached at residues N848, N1201, N1258, and N1420. A disulfide bridge connects residues C1023 and C1216. The helical transmembrane segment at 1452–1472 (IAVGVLGTVLPFALLILFFIY) threads the bilayer. At 1473 to 1551 (GDKMLWPFKV…KKEKKLSEIA (79 aa)) the chain is on the cytoplasmic side.

The protein belongs to the nairovirus envelope glycoprotein family. In terms of assembly, heterodimer with glycoprotein C; in prefusion state. As to quaternary structure, heterodimer with glycoprotein N; in prefusion state. Homotrimeric; in postfusion state. In terms of processing, specific enzymatic cleavage by host MBTPS1/S1P/SKI-1 endopeptidase yield glycoprotein N. Specific enzymatic cleavages by host furin-like protease and MBTPS1/S1P endopeptidase yield GP38. Post-translationally, glycosylated.

It localises to the host endoplasmic reticulum membrane. Its subcellular location is the virion membrane. It is found in the host Golgi apparatus membrane. Functionally, glycoprotein N and glycoprotein C interact with each other and are present at the surface of the virion. Glycoprotein N probably locks the Gn-Gc complex in a prefusion state. Glycoprotein N and glycoprotein C are able to attach the virion to host cell receptors. This attachment induces virion internalization predominantly through clathrin-dependent endocytosis. In terms of biological role, glycoprotein C and glycoprotein N interact with each other and are present at the surface of the virion. The spikes at the surface of the virion are formed by an N-terminal extension of glycoprotein C. Glycoprotein N and glycoprotein C are able to attach the virion to host cell receptors. This attachment induces virion internalization predominantly through clathrin-dependent endocytosis. Class II fusion protein that promotes fusion of viral membrane with host endosomal membrane after endocytosis of the virion. Exposure to potassium is necessary for the conformational change leading to fusion. This is Envelopment polyprotein (GP) from Amblyomma variegatum (Tropical bont tick).